A 69-amino-acid polypeptide reads, in one-letter code: Putative membrane protein insertion efficiency factor (69 aa).

This sequence belongs to the UPF0161 family.

The protein localises to the cell inner membrane. Its function is as follows. Could be involved in insertion of integral membrane proteins into the membrane. The protein is Putative membrane protein insertion efficiency factor of Syntrophotalea carbinolica (strain DSM 2380 / NBRC 103641 / GraBd1) (Pelobacter carbinolicus).